The chain runs to 224 residues: uncharacterized protein (224 aa).

Asparagine 10, asparagine 70, and asparagine 74 each carry an N-linked (GlcNAc...) asparagine glycan.

The protein resides in the endoplasmic reticulum. This is an uncharacterized protein from Saccharomyces cerevisiae (strain ATCC 204508 / S288c) (Baker's yeast).